Reading from the N-terminus, the 160-residue chain is Cyclic pyranopterin monophosphate synthase (160 aa).

Substrate is bound by residues 77–79 and 114–115; these read MCH and ME. Asp-129 is a catalytic residue.

It belongs to the MoaC family. In terms of assembly, homohexamer; trimer of dimers.

It catalyses the reaction (8S)-3',8-cyclo-7,8-dihydroguanosine 5'-triphosphate = cyclic pyranopterin phosphate + diphosphate. The protein operates within cofactor biosynthesis; molybdopterin biosynthesis. Catalyzes the conversion of (8S)-3',8-cyclo-7,8-dihydroguanosine 5'-triphosphate to cyclic pyranopterin monophosphate (cPMP). This Listeria monocytogenes serotype 4b (strain F2365) protein is Cyclic pyranopterin monophosphate synthase.